A 348-amino-acid polypeptide reads, in one-letter code: Anthranilate phosphoribosyltransferase (348 aa).

5-phospho-alpha-D-ribose 1-diphosphate-binding positions include G81, 84–85, 91–94, 109–117, and S121; these read GD, NVST, and KHGNRAVSG. G81 provides a ligand contact to anthranilate. S93 is a Mg(2+) binding site. Residue N112 coordinates anthranilate. Residue R167 coordinates anthranilate. The Mg(2+) site is built by D226 and E227.

This sequence belongs to the anthranilate phosphoribosyltransferase family. In terms of assembly, homodimer. Mg(2+) is required as a cofactor.

The catalysed reaction is N-(5-phospho-beta-D-ribosyl)anthranilate + diphosphate = 5-phospho-alpha-D-ribose 1-diphosphate + anthranilate. Its pathway is amino-acid biosynthesis; L-tryptophan biosynthesis; L-tryptophan from chorismate: step 2/5. Functionally, catalyzes the transfer of the phosphoribosyl group of 5-phosphorylribose-1-pyrophosphate (PRPP) to anthranilate to yield N-(5'-phosphoribosyl)-anthranilate (PRA). This Azotobacter vinelandii (strain DJ / ATCC BAA-1303) protein is Anthranilate phosphoribosyltransferase.